Here is a 412-residue protein sequence, read N- to C-terminus: Acyl-[acyl-carrier-protein] hydrolase FATB3, chloroplastic (412 aa).

Residues 1–25 show a composition bias toward low complexity; sequence MVAAAASSAFFSFPTPGTSPKPGKF. The N-terminal 50 residues, 1–50, are a transit peptide targeting the chloroplast; the sequence is MVAAAASSAFFSFPTPGTSPKPGKFGNWPSSLSIPFNPKSNHNGGIQVKA. The tract at residues 1-63 is disordered; the sequence is MVAAAASSAF…AHPKANGSAV (63 aa). A compositionally biased stretch (polar residues) spans 28-44; the sequence is WPSSLSIPFNPKSNHNG. Residues Asn-310, His-312, and Cys-347 contribute to the active site. The tract at residues 393–412 is disordered; that stretch reads NAGATGAVSTGKTSNGNSVS. Residues 399 to 412 show a composition bias toward polar residues; it reads AVSTGKTSNGNSVS.

The protein belongs to the acyl-ACP thioesterase family.

It is found in the plastid. It localises to the chloroplast. It carries out the reaction tetradecanoyl-[ACP] + H2O = tetradecanoate + holo-[ACP] + H(+). Its function is as follows. Plays an essential role in chain termination during de novo fatty acid synthesis. Possesses thioesterase activity for medium chain acyl-ACPs. Main substrate is 14:0. This is Acyl-[acyl-carrier-protein] hydrolase FATB3, chloroplastic from Cuphea viscosissima (Blue waxweed).